A 393-amino-acid polypeptide reads, in one-letter code: MRYSDFTQRIAGDGAAAWDIHYRALARVEQGEEILLLSVGDPDFDTPAPIVQAAIDSLLAGNTHYADVRGKRALRQRIAERHRRRSGQAVDAEQVVVLAGAQCALYAVVQCLLNPGDEVIVAEPMYVTYEAVFGACGARVVPVPVRSENGFRVQAEEVAALITPRTRAMALNSPHNPSGASLPRATWEALAELCMAHDLWMISDEVYSELLFDGEHVSPASLPGMADRTATLNSLSKSHAMTGWRVGWVVGPAALCAHLENLALCMLYGSPEFIQDAACTALEAPLPELEAMREAYRRRRDLVIECLADSPGLRPLRPDGGMFVMVDIRPTGLSAQAFADRLLDRHGVSVLAGEAFGPSAAGHIRLGLVLGAEPLREACRRIALCAAELLGQA.

Residue K237 is modified to N6-(pyridoxal phosphate)lysine.

The protein belongs to the class-I pyridoxal-phosphate-dependent aminotransferase family. Homodimer. Pyridoxal 5'-phosphate is required as a cofactor.

It carries out the reaction L-arginine + pyruvate = 5-guanidino-2-oxopentanoate + L-alanine. Its pathway is amino-acid degradation; L-arginine degradation. Functionally, catalyzes the conversion of L-arginine into 2-ketoarginine via transamination. L-arginine is the best substrate, but it can also use L-lysine, L-methionine, L-leucine, ornithine and L-glutamine, which indicates that it may have a broader physiological function in amino acid catabolism. This is Arginine--pyruvate transaminase AruH (aruH) from Pseudomonas aeruginosa (strain ATCC 15692 / DSM 22644 / CIP 104116 / JCM 14847 / LMG 12228 / 1C / PRS 101 / PAO1).